The primary structure comprises 400 residues: Nicotinate phosphoribosyltransferase (400 aa).

The residue at position 220 (His-220) is a Phosphohistidine; by autocatalysis.

This sequence belongs to the NAPRTase family. In terms of processing, transiently phosphorylated on a His residue during the reaction cycle. Phosphorylation strongly increases the affinity for substrates and increases the rate of nicotinate D-ribonucleotide production. Dephosphorylation regenerates the low-affinity form of the enzyme, leading to product release.

The catalysed reaction is nicotinate + 5-phospho-alpha-D-ribose 1-diphosphate + ATP + H2O = nicotinate beta-D-ribonucleotide + ADP + phosphate + diphosphate. Its pathway is cofactor biosynthesis; NAD(+) biosynthesis; nicotinate D-ribonucleotide from nicotinate: step 1/1. Functionally, catalyzes the synthesis of beta-nicotinate D-ribonucleotide from nicotinate and 5-phospho-D-ribose 1-phosphate at the expense of ATP. In Citrobacter koseri (strain ATCC BAA-895 / CDC 4225-83 / SGSC4696), this protein is Nicotinate phosphoribosyltransferase.